We begin with the raw amino-acid sequence, 214 residues long: Dephospho-CoA kinase (214 aa).

Residues 3 to 202 enclose the DPCK domain; it reads KIGLTGGIGS…DRWLALAGAA (200 aa). 11 to 16 contacts ATP; sequence GSGKSR.

Belongs to the CoaE family.

Its subcellular location is the cytoplasm. The catalysed reaction is 3'-dephospho-CoA + ATP = ADP + CoA + H(+). It functions in the pathway cofactor biosynthesis; coenzyme A biosynthesis; CoA from (R)-pantothenate: step 5/5. Its function is as follows. Catalyzes the phosphorylation of the 3'-hydroxyl group of dephosphocoenzyme A to form coenzyme A. The chain is Dephospho-CoA kinase from Bordetella pertussis (strain Tohama I / ATCC BAA-589 / NCTC 13251).